The following is a 630-amino-acid chain: Coiled-coil domain-containing protein 120 (630 aa).

The involved in CYTH2-binding stretch occupies residues 31–70 (RLRGLLDRQRTLQEALSLKLQELRKVCLQEAELTGQLPPE). A coiled-coil region spans residues 109 to 173 (ELALEALERE…LRDVRARLGL (65 aa)). Composition is skewed to low complexity over residues 212 to 222 (HSESSSLSESG) and 282 to 297 (ASPT…SASS). Disordered stretches follow at residues 212–435 (HSES…GAPR) and 457–534 (GGGT…NPLL). Positions 326 to 335 (RQWSGSQDSQ) are enriched in polar residues. A phosphoserine mark is found at serine 358 and serine 360. The segment covering 421–434 (ARPSSAAPASRGAP) has biased composition (low complexity). Arginine 435 bears the Omega-N-methylarginine mark.

Interacts with NIN and CEP170; leading to recruit them to centrosomes. Directly interacts with CYTH2; this interaction stabilizes CCDC120, possibly by preventing ubiquitination. In terms of processing, ubiquitinated; interaction with CYTH2 may prevent ubiquitination.

The protein resides in the cytoplasm. Its subcellular location is the cytoskeleton. It is found in the microtubule organizing center. The protein localises to the centrosome. It localises to the centriole. The protein resides in the cell projection. Its subcellular location is the neuron projection. It is found in the growth cone. The protein localises to the endosome. Its function is as follows. Centriolar protein required for centriole subdistal appendage assembly and microtubule anchoring in interphase cells. Together with CCDC68, cooperate with subdistal appendage components ODF2, NIN and CEP170 for hierarchical subdistal appendage assembly. Recruits NIN and CEP170 to centrosomes. Also required for neurite growth. Localizes CYTH2 to vesicles to allow its transport along neurites, and subsequent ARF6 activation and neurite growth. This chain is Coiled-coil domain-containing protein 120 (CCDC120), found in Homo sapiens (Human).